Reading from the N-terminus, the 374-residue chain is Cysteine-type anaerobic sulfatase-maturating enzyme (374 aa).

The 227-residue stretch at 1 to 227 (MKSLSMLIKP…LNKLFDLWFK (227 aa)) folds into the Radical SAM core domain. The [4Fe-4S] cluster site is built by C15 and C19. Y21 is an S-adenosyl-L-methionine binding site. C22 is a [4Fe-4S] cluster binding site. Residues G66, S122, R134, and L195 each coordinate S-adenosyl-L-methionine. [4Fe-4S] cluster is bound by residues C255, C261, and C276. The Proton acceptor role is filled by D277. [4Fe-4S] cluster-binding residues include C317, C320, C326, C330, and C348.

It belongs to the radical SAM superfamily. Anaerobic sulfatase-maturating enzyme family. Requires [4Fe-4S] cluster as cofactor.

The catalysed reaction is L-cysteinyl-[sulfatase] + S-adenosyl-L-methionine + H2O = 3-oxo-L-alanyl-[sulfatase] + hydrogen sulfide + 5'-deoxyadenosine + L-methionine + 2 H(+). The protein operates within protein modification; sulfatase oxidation. Its function is as follows. Involved in 'Cys-type' sulfatase maturation under anaerobic conditions. Catalyzes the post-translational modification of cysteine into 3-oxoalanine (also known as C(alpha)-formylglycine (FGly)), by a free radical chemical mechanism initiated via the reductive cleavage of S-adenosyl-L-methionine (SAM). In Clostridium novyi (strain NT), this protein is Cysteine-type anaerobic sulfatase-maturating enzyme.